Here is a 549-residue protein sequence, read N- to C-terminus: Dihydroxy-acid dehydratase (549 aa).

D78 is a binding site for Mg(2+). C119 contacts [2Fe-2S] cluster. Mg(2+)-binding residues include D120 and K121. Position 121 is an N6-carboxylysine (K121). Position 191 (C191) interacts with [2Fe-2S] cluster. E441 provides a ligand contact to Mg(2+). S466 serves as the catalytic Proton acceptor.

It belongs to the IlvD/Edd family. In terms of assembly, homodimer. [2Fe-2S] cluster is required as a cofactor. It depends on Mg(2+) as a cofactor.

It catalyses the reaction (2R)-2,3-dihydroxy-3-methylbutanoate = 3-methyl-2-oxobutanoate + H2O. It carries out the reaction (2R,3R)-2,3-dihydroxy-3-methylpentanoate = (S)-3-methyl-2-oxopentanoate + H2O. Its pathway is amino-acid biosynthesis; L-isoleucine biosynthesis; L-isoleucine from 2-oxobutanoate: step 3/4. It functions in the pathway amino-acid biosynthesis; L-valine biosynthesis; L-valine from pyruvate: step 3/4. Functions in the biosynthesis of branched-chain amino acids. Catalyzes the dehydration of (2R,3R)-2,3-dihydroxy-3-methylpentanoate (2,3-dihydroxy-3-methylvalerate) into 2-oxo-3-methylpentanoate (2-oxo-3-methylvalerate) and of (2R)-2,3-dihydroxy-3-methylbutanoate (2,3-dihydroxyisovalerate) into 2-oxo-3-methylbutanoate (2-oxoisovalerate), the penultimate precursor to L-isoleucine and L-valine, respectively. This chain is Dihydroxy-acid dehydratase, found in Methanosphaera stadtmanae (strain ATCC 43021 / DSM 3091 / JCM 11832 / MCB-3).